The primary structure comprises 284 residues: Tropomyosin (284 aa).

2 disordered regions span residues 1-27 and 99-131; these read MDAIKKKMQAMKVDRENAQDLAEQMEQ and YERSEEKLNSTTEKLEEASKAADESERNRKVLE. Residues 1–273 are a coiled coil; the sequence is MDAIKKKMQA…KERYKAISDD (273 aa). Residues 102–131 show a composition bias toward basic and acidic residues; sequence SEEKLNSTTEKLEEASKAADESERNRKVLE.

The protein belongs to the tropomyosin family. In terms of assembly, homodimer.

Its function is as follows. Tropomyosin, in association with the troponin complex, plays a central role in the calcium dependent regulation of muscle contraction. This chain is Tropomyosin, found in Mimachlamys nobilis (Noble scallop).